The chain runs to 708 residues: Leukotoxin translocation ATP-binding protein LktB (708 aa).

Residues 1 to 126 enclose the Peptidase C39 domain; sequence MEVNHQSNDL…SCYQGKIILV (126 aa). The region spanning 155–437 is the ABC transmembrane type-1 domain; sequence FLETLLVSIF…LAQLWQDFTQ (283 aa). 5 helical membrane passes run 159–179, 192–212, 270–290, 296–316, and 389–409; these read LLVSIFLQIFALITPLFFQVV, LNIITVALAIVIIFEIVLSGL, ALTSVLDLLFSFIFFAVMWYY, LVILGSLPCYILWSIFISPIL, and VMVINLWLGAHLVISGDLSIG. One can recognise an ABC transporter domain in the interval 469-704; that stretch reads IAFKNIRFRY…NNGLYSYLHQ (236 aa). Residue 503–510 coordinates ATP; that stretch reads GRSGSGKS.

Belongs to the ABC transporter superfamily. Protein-1 exporter (TC 3.A.1.109) family. In terms of assembly, homodimer.

It is found in the cell inner membrane. The catalysed reaction is ATP + H2O + proteinSide 1 = ADP + phosphate + proteinSide 2.. Its function is as follows. Part of the ABC transporter complex LktBD involved in leukotoxin export. Transmembrane domains (TMD) form a pore in the inner membrane and the ATP-binding domain (NBD) is responsible for energy generation. The protein is Leukotoxin translocation ATP-binding protein LktB (lktB) of Pasteurella haemolytica-like sp. (strain 5943B).